Consider the following 108-residue polypeptide: UPF0145 protein alr2488 (108 aa).

The protein belongs to the UPF0145 family.

The chain is UPF0145 protein alr2488 from Nostoc sp. (strain PCC 7120 / SAG 25.82 / UTEX 2576).